An 803-amino-acid chain; its full sequence is Urocanate reductase (803 aa).

Position 258 is an FMN phosphoryl serine (Ser258). Ala311, Glu330, Asn338, Thr339, Gly343, Gly344, and Asp573 together coordinate FAD. Arg632 functions as the Proton donor in the catalytic mechanism. FAD contacts are provided by His739, Glu768, Ala783, and Leu784.

It belongs to the FAD-dependent oxidoreductase 2 family. FRD/SDH subfamily. The cofactor is FAD. FMN serves as cofactor.

The enzyme catalyses dihydrourocanate + A = urocanate + AH2. In terms of biological role, catalyzes the two-electron reduction of urocanate to dihydrourocanate (also named imidazole propionate or deamino-histidine). Dihydrourocanate is present at higher concentrations in subjects with type 2 diabetes, and directly impairs glucose tolerance and insulin signaling at the level of insulin receptor substrate (IRS) through activation of p38 gamma (MAPK12)-p62-mTORC1. Therefore, the UrdA enzyme from the gut bacteria S.mutans strain UA159 may contribute to the pathogenesis of type 2 diabetes by producing the microbial metabolite dihydrourocanate. The chain is Urocanate reductase from Streptococcus mutans serotype c (strain ATCC 700610 / UA159).